We begin with the raw amino-acid sequence, 163 residues long: Inorganic pyrophosphatase (163 aa).

Residue E8 coordinates Mg(2+). Substrate is bound by residues K16, R30, and Y42. Mg(2+) contacts are provided by D52, D57, D84, and D89. D89 functions as the Proton acceptor in the catalytic mechanism. Position 126 (Y126) interacts with substrate.

This sequence belongs to the PPase family. As to quaternary structure, homohexamer. Mg(2+) serves as cofactor.

The protein resides in the cytoplasm. The catalysed reaction is diphosphate + H2O = 2 phosphate + H(+). In terms of biological role, catalyzes the hydrolysis of inorganic pyrophosphate (PPi) forming two phosphate ions. The polypeptide is Inorganic pyrophosphatase (Streptomyces coelicolor (strain ATCC BAA-471 / A3(2) / M145)).